Consider the following 234-residue polypeptide: Large ribosomal subunit protein uL1 (234 aa).

Belongs to the universal ribosomal protein uL1 family. As to quaternary structure, part of the 50S ribosomal subunit.

In terms of biological role, binds directly to 23S rRNA. The L1 stalk is quite mobile in the ribosome, and is involved in E site tRNA release. Its function is as follows. Protein L1 is also a translational repressor protein, it controls the translation of the L11 operon by binding to its mRNA. This Geobacter metallireducens (strain ATCC 53774 / DSM 7210 / GS-15) protein is Large ribosomal subunit protein uL1.